We begin with the raw amino-acid sequence, 476 residues long: Cysteine--tRNA ligase (476 aa).

Cys-30 is a Zn(2+) binding site. A 'HIGH' region motif is present at residues 32–42; it reads PTVYNYIHIGN. Zn(2+) contacts are provided by Cys-215, His-240, and Glu-244. Positions 274-278 match the 'KMSKS' region motif; that stretch reads KMSKS. An ATP-binding site is contributed by Lys-277.

This sequence belongs to the class-I aminoacyl-tRNA synthetase family. As to quaternary structure, monomer. Requires Zn(2+) as cofactor.

It is found in the cytoplasm. The catalysed reaction is tRNA(Cys) + L-cysteine + ATP = L-cysteinyl-tRNA(Cys) + AMP + diphosphate. This chain is Cysteine--tRNA ligase, found in Lactobacillus helveticus (strain DPC 4571).